Here is a 385-residue protein sequence, read N- to C-terminus: Nonsense-mediated mRNA decay factor SMG9 (385 aa).

A disordered region spans residues 1–32; the sequence is MKKVEILKTSRPSSAGGAARPSTASPTHGAPK.

The protein belongs to the SMG9 family.

Involved in nonsense-mediated decay (NMD) of mRNAs containing premature stop codons. Probable component of kinase complex containing smg-1 and recruited to stalled ribosomes. The polypeptide is Nonsense-mediated mRNA decay factor SMG9 (smg-9) (Caenorhabditis elegans).